The chain runs to 102 residues: Class I hydrophobin 1 (102 aa).

Positions 1–18 (MSLFKILVAAATVATALA) are cleaved as a signal peptide. Cystine bridges form between Cys37–Cys84, Cys45–Cys78, Cys46–Cys63, and Cys85–Cys97.

The protein belongs to the fungal hydrophobin family.

Its subcellular location is the secreted. It is found in the cell wall. Its function is as follows. Aerial growth, conidiation, and dispersal of filamentous fungi in the environment rely upon a capability of their secreting small amphipathic proteins called hydrophobins (HPBs) with low sequence identity. Class I can self-assemble into an outermost layer of rodlet bundles on aerial cell surfaces, conferring cellular hydrophobicity that supports fungal growth, development and dispersal; whereas Class II form highly ordered films at water-air interfaces through intermolecular interactions but contribute nothing to the rodlet structure. Hyd1 is essential for stress tolerance, conidial hydrophobicity, adhesion to insect cuticle, and insect infectivity/pathogenicity. Plays a neglectable role in hyphal growth and asexual development. This chain is Class I hydrophobin 1, found in Metarhizium robertsii (strain ARSEF 23 / ATCC MYA-3075) (Metarhizium anisopliae (strain ARSEF 23)).